A 600-amino-acid chain; its full sequence is Putative DNA 3'-5' helicase Rad25 (600 aa).

The Helicase ATP-binding domain maps to 253 to 402 (VDRFEDASAG…DIYTLVGRPI (150 aa)). 266–273 (GPPGSGKT) lines the ATP pocket. Positions 356–359 (DEVH) match the DEAH box motif. One can recognise a Helicase C-terminal domain in the interval 457–600 (EIEHLVDQHG…VTESDASHSP (144 aa)). The interval 569–600 (RGTEEEDHARSRMRHLSTKGVRVTESDASHSP) is disordered. A compositionally biased stretch (basic and acidic residues) spans 590–600 (RVTESDASHSP).

The protein belongs to the helicase family. RAD25/XPB subfamily.

The enzyme catalyses Couples ATP hydrolysis with the unwinding of duplex DNA by translocating in the 3'-5' direction.. It carries out the reaction ATP + H2O = ADP + phosphate + H(+). This Halobacterium salinarum (strain ATCC 700922 / JCM 11081 / NRC-1) (Halobacterium halobium) protein is Putative DNA 3'-5' helicase Rad25.